The primary structure comprises 234 residues: Leucyl/phenylalanyl-tRNA--protein transferase (234 aa).

This sequence belongs to the L/F-transferase family.

The protein resides in the cytoplasm. It catalyses the reaction N-terminal L-lysyl-[protein] + L-leucyl-tRNA(Leu) = N-terminal L-leucyl-L-lysyl-[protein] + tRNA(Leu) + H(+). The enzyme catalyses N-terminal L-arginyl-[protein] + L-leucyl-tRNA(Leu) = N-terminal L-leucyl-L-arginyl-[protein] + tRNA(Leu) + H(+). The catalysed reaction is L-phenylalanyl-tRNA(Phe) + an N-terminal L-alpha-aminoacyl-[protein] = an N-terminal L-phenylalanyl-L-alpha-aminoacyl-[protein] + tRNA(Phe). Functionally, functions in the N-end rule pathway of protein degradation where it conjugates Leu, Phe and, less efficiently, Met from aminoacyl-tRNAs to the N-termini of proteins containing an N-terminal arginine or lysine. The sequence is that of Leucyl/phenylalanyl-tRNA--protein transferase from Escherichia fergusonii (strain ATCC 35469 / DSM 13698 / CCUG 18766 / IAM 14443 / JCM 21226 / LMG 7866 / NBRC 102419 / NCTC 12128 / CDC 0568-73).